The primary structure comprises 613 residues: MRLSQMLFVTLREDPAEAEIPSHKLLLRAGYIRRIGSGVYAYLPLMWRVLGKVSQIVRQEMNAAGAQECLLPQIQPAELWQESGRWDTYTKAEGIMFALTDRQDRQLGLGPTHEEVITTIARDLIRTYRQLPQNLYQIQTKFRDEIRPRFGLMRGREFIMKDAYSFDADVESLRVAYGKMHQAYCNILQRCGLKYRAVDADSGAIGGSGSQEFMVLADAGEDEVLYTEDGRYAANVEKAISLPVDAEPSGLTKFEKRETPGTDTIDKLCQFLKCSPTQVVKNVLYQAVYDNGQTVLVLVSIRGDQEVNEVKLQNELVKLAGKFGGKTVLALTVPDAEMQSKWASQSLPLGYIAPDLADSYIAATKDIHPQFVRLVDQTAVDLKNFVTGANESGYHVVGANWAEAKGKKTKAKSGEFALPDGVVDVRKARPGDRALHNPEQTLKTARGIEIGHIFQLGTKYSQAMGATYTNEQGEEVPLVMGCYGIGVSRLAQAAVEQSYDKDGIIWPVAIAPYQAIVVIPNLNETTQVEAATQLYQDLNAAGIETLLDDRNERAGVKFKDADLIGIPYRIVTGRSLAQGKVEVVQRASRSSTEIALDQVIPTLKEWIAAACPS.

Belongs to the class-II aminoacyl-tRNA synthetase family. ProS type 1 subfamily. In terms of assembly, homodimer.

It is found in the cytoplasm. The catalysed reaction is tRNA(Pro) + L-proline + ATP = L-prolyl-tRNA(Pro) + AMP + diphosphate. Catalyzes the attachment of proline to tRNA(Pro) in a two-step reaction: proline is first activated by ATP to form Pro-AMP and then transferred to the acceptor end of tRNA(Pro). As ProRS can inadvertently accommodate and process non-cognate amino acids such as alanine and cysteine, to avoid such errors it has two additional distinct editing activities against alanine. One activity is designated as 'pretransfer' editing and involves the tRNA(Pro)-independent hydrolysis of activated Ala-AMP. The other activity is designated 'posttransfer' editing and involves deacylation of mischarged Ala-tRNA(Pro). The misacylated Cys-tRNA(Pro) is not edited by ProRS. The protein is Proline--tRNA ligase of Cyanothece sp. (strain PCC 7425 / ATCC 29141).